Reading from the N-terminus, the 4299-residue chain is DNA-dependent protein kinase catalytic subunit (4299 aa).

The stretch at 551–590 forms a coiled coil; it reads KDLNSTIKKENNNNNNNKNKNNNNNQTLTKEEISKSIKKL. Disordered stretches follow at residues 557–577, 613–633, 878–917, and 1206–1230; these read IKKE…NNQT, DEND…DQDN, NSSD…MKFK, and SSSK…EDGT. 4 stretches are compositionally biased toward low complexity: residues 562 to 575, 617 to 631, 878 to 893, and 1206 to 1226; these read NNNN…NNNN, NNSN…NNDQ, NSSD…IDSG, and SSSK…NNNS. A Phosphoserine; by autocatalysis modification is found at Ser-2789. Phosphothreonine; by autocatalysis is present on residues Thr-2814 and Thr-2822. A compositionally biased stretch (low complexity) spans 2832–2867; sequence SSSQSYGGTNNNTGSSQLSSSSSSSGSQSSSQNNSS. 2 disordered regions span residues 2832–2881 and 3535–3559; these read SSSQ…PKLI and TTSS…SSSQ. The FAT domain maps to 3031–3707; that stretch reads KIKDISLNSN…YFPFKISSEQ (677 aa). In terms of domain architecture, PI3K/PI4K catalytic spans 3887–4226; that stretch reads FDTNVLVMGS…AKKKLELVNP (340 aa). Residues 3893 to 3899 are G-loop; that stretch reads VMGSLRK. Residues 4092-4100 form a catalytic loop region; that stretch reads GIGDRHLEN. Residues 4112 to 4137 form an activation loop region; it reads GIDFGHAFGTATQFLPIPELMPFRLT. Positions 4267 to 4299 constitute an FATC domain; it reads VCSSVKEQIDCLIDQSTDPNILSRAWVGWNGAL.

The protein belongs to the PI3/PI4-kinase family. DNAPK subfamily. May be phosphorylated upon DNA damage. Could be autophosphorylated. Autophosphorylation induces a conformational change that leads to remodeling of the DNA-PK complex, requisite for efficient end processing and DNA repair. Post-translationally, autophosphorylated on Ser-2789, Thr-2814 and Thr-2822. Ser-2789 is a DNA damage-inducible phosphorylation site (inducible with ionizing radiation, IR).

Its subcellular location is the nucleus. The protein localises to the nucleolus. The catalysed reaction is L-seryl-[protein] + ATP = O-phospho-L-seryl-[protein] + ADP + H(+). It catalyses the reaction L-threonyl-[protein] + ATP = O-phospho-L-threonyl-[protein] + ADP + H(+). Inhibited by wortmannin. Activity of the enzyme seems to be attenuated by autophosphorylation. Serine/threonine-protein kinase that acts as a molecular sensor for DNA damage. Is recruited to DNA ends by the Ku70/Ku80 heterodimer and is involved in DNA non-homologous end joining (NHEJ) required for double-strand break (DSB) repair and V(D)J recombination. This activity is only apparent when DNA damage is administered in G1 phase of the cell cycle. Required for efficient signaling of DNA double-stranded breaks via phosphorylation of H2AX during G1. This Dictyostelium discoideum (Social amoeba) protein is DNA-dependent protein kinase catalytic subunit (dnapkcs).